Reading from the N-terminus, the 139-residue chain is ATP synthase epsilon chain (139 aa).

It belongs to the ATPase epsilon chain family. F-type ATPases have 2 components, CF(1) - the catalytic core - and CF(0) - the membrane proton channel. CF(1) has five subunits: alpha(3), beta(3), gamma(1), delta(1), epsilon(1). CF(0) has three main subunits: a, b and c.

The protein resides in the cell inner membrane. Functionally, produces ATP from ADP in the presence of a proton gradient across the membrane. The chain is ATP synthase epsilon chain from Acinetobacter baumannii (strain AB307-0294).